A 148-amino-acid polypeptide reads, in one-letter code: Putative FAD-linked sulfhydryl oxidase 096R (148 aa).

The region spanning 1–103 (MSIDPKLWGN…LAAKTVFQRY (103 aa)) is the ERV/ALR sulfhydryl oxidase domain. The cysteines at positions 48 and 51 are disulfide-linked. The helical transmembrane segment at 122–142 (WSPWLTTALAVILVVVVAGIG) threads the bilayer.

It belongs to the IIV-6 347L family. It depends on FAD as a cofactor.

The protein resides in the membrane. It carries out the reaction 2 R'C(R)SH + O2 = R'C(R)S-S(R)CR' + H2O2. Its function is as follows. FAD-dependent sulfhydryl oxidase that catalyzes disulfide bond formation. This is Putative FAD-linked sulfhydryl oxidase 096R from Aedes vexans (Inland floodwater mosquito).